The following is a 233-amino-acid chain: Preprocaerulein type-4 (233 aa).

The first 26 residues, 1 to 26 (MFKGILLCVLFAVLSANPLSQPEGFA), serve as a signal peptide directing secretion. Residues 27 to 72 (DEERDVRGLASLLGKALKATLKIGTHFLGGAPQQREANDERRFADG) constitute a propeptide that is removed on maturation. Glutamine 73 carries the post-translational modification Pyrrolidone carboxylic acid. The residue at position 76 (tyrosine 76) is a Sulfotyrosine. Residue phenylalanine 82 is modified to Phenylalanine amide. The propeptide occupies 86 to 87 (DG). Pyrrolidone carboxylic acid is present on glutamine 88. Tyrosine 91 bears the Sulfotyrosine mark. Phenylalanine 97 carries the post-translational modification Phenylalanine amide. Positions 101-151 (DDEDDVHERDVRGFGSFLGKALKAALKIGANALGGAPQQREANDERRFADG) are excised as a propeptide. The residue at position 152 (glutamine 152) is a Pyrrolidone carboxylic acid. The residue at position 155 (tyrosine 155) is a Sulfotyrosine. Phenylalanine amide is present on phenylalanine 161. The propeptide occupies 165–215 (DDEDDVNERDVRGFGSFLGKALKAALKIGANALGGSPQQREANDERRFADG). The interval 197 to 233 (LGGSPQQREANDERRFADGQQDYTGWMDFGRRNGEDD) is disordered. Position 216 is a pyrrolidone carboxylic acid (glutamine 216). At tyrosine 219 the chain carries Sulfotyrosine. A Phenylalanine amide modification is found at phenylalanine 225. A propeptide spanning residues 229–233 (NGEDD) is cleaved from the precursor.

The protein belongs to the gastrin/cholecystokinin family. Expressed by the skin glands.

It is found in the secreted. In terms of biological role, the pharmacological activities of caerulein are quite similar to the physiological activities of gastrin and related peptides. The polypeptide is Preprocaerulein type-4 (Xenopus laevis (African clawed frog)).